The chain runs to 99 residues: PE family immunomodulator PE35 (99 aa).

One can recognise a PE domain in the interval 1 to 90; that stretch reads MEKMSHDPIA…DVARTYSQID (90 aa).

It belongs to the mycobacterial PE family. In terms of assembly, interacts with PPE68. PE35/PPE68 complex interacts with human TLR2.

Its subcellular location is the secreted. The protein resides in the cell surface. In terms of biological role, plays a major role in RD1-associated pathogenesis, and may contribute to the establishment and maintenance of M.tuberculosis infection. Together with PPE68, stimulates the secretion of IL-10 and MCP-1 from human macrophages, via the interaction with human Toll-like receptor 2 (TLR2). This Mycobacterium tuberculosis (strain ATCC 25618 / H37Rv) protein is PE family immunomodulator PE35 (PE35).